A 375-amino-acid polypeptide reads, in one-letter code: Queuine tRNA-ribosyltransferase (375 aa).

The active-site Proton acceptor is D90. Substrate contacts are provided by residues 90–94 (DSGGF), D144, Q193, and G220. Residues 251 to 257 (GVGTPED) form an RNA binding region. Catalysis depends on D270, which acts as the Nucleophile. The tract at residues 275-279 (TRNAR) is RNA binding; important for wobble base 34 recognition. Positions 308, 310, 313, and 339 each coordinate Zn(2+).

It belongs to the queuine tRNA-ribosyltransferase family. Homodimer. Within each dimer, one monomer is responsible for RNA recognition and catalysis, while the other monomer binds to the replacement base PreQ1. Zn(2+) serves as cofactor.

It carries out the reaction 7-aminomethyl-7-carbaguanine + guanosine(34) in tRNA = 7-aminomethyl-7-carbaguanosine(34) in tRNA + guanine. Its pathway is tRNA modification; tRNA-queuosine biosynthesis. Its function is as follows. Catalyzes the base-exchange of a guanine (G) residue with the queuine precursor 7-aminomethyl-7-deazaguanine (PreQ1) at position 34 (anticodon wobble position) in tRNAs with GU(N) anticodons (tRNA-Asp, -Asn, -His and -Tyr). Catalysis occurs through a double-displacement mechanism. The nucleophile active site attacks the C1' of nucleotide 34 to detach the guanine base from the RNA, forming a covalent enzyme-RNA intermediate. The proton acceptor active site deprotonates the incoming PreQ1, allowing a nucleophilic attack on the C1' of the ribose to form the product. After dissociation, two additional enzymatic reactions on the tRNA convert PreQ1 to queuine (Q), resulting in the hypermodified nucleoside queuosine (7-(((4,5-cis-dihydroxy-2-cyclopenten-1-yl)amino)methyl)-7-deazaguanosine). The polypeptide is Queuine tRNA-ribosyltransferase (Methylibium petroleiphilum (strain ATCC BAA-1232 / LMG 22953 / PM1)).